The chain runs to 184 residues: dITP/XTP pyrophosphatase (184 aa).

Substrate is bound at residue 7–12 (TSNPGK). The Mg(2+) site is built by glutamate 36 and aspartate 65. The active-site Proton acceptor is aspartate 65. Residues serine 66, 139-142 (FGFD), lysine 162, and 167-168 (HR) contribute to the substrate site.

This sequence belongs to the HAM1 NTPase family. Homodimer. Mg(2+) is required as a cofactor.

It carries out the reaction XTP + H2O = XMP + diphosphate + H(+). It catalyses the reaction dITP + H2O = dIMP + diphosphate + H(+). The enzyme catalyses ITP + H2O = IMP + diphosphate + H(+). Pyrophosphatase that catalyzes the hydrolysis of nucleoside triphosphates to their monophosphate derivatives, with a high preference for the non-canonical purine nucleotides XTP (xanthosine triphosphate), dITP (deoxyinosine triphosphate) and ITP. Seems to function as a house-cleaning enzyme that removes non-canonical purine nucleotides from the nucleotide pool, thus preventing their incorporation into DNA/RNA and avoiding chromosomal lesions. This is dITP/XTP pyrophosphatase from Thermococcus kodakarensis (strain ATCC BAA-918 / JCM 12380 / KOD1) (Pyrococcus kodakaraensis (strain KOD1)).